Reading from the N-terminus, the 494-residue chain is 3-octaprenyl-4-hydroxybenzoate carboxy-lyase (494 aa).

Position 172 (Asn172) interacts with Mn(2+). Residues 175-177 (IYR), 189-191 (RWL), and 194-195 (RG) each bind prenylated FMN. A Mn(2+)-binding site is contributed by Glu238. Asp287 (proton donor) is an active-site residue.

This sequence belongs to the UbiD family. As to quaternary structure, homohexamer. Prenylated FMN is required as a cofactor. It depends on Mn(2+) as a cofactor.

It is found in the cell membrane. The enzyme catalyses a 4-hydroxy-3-(all-trans-polyprenyl)benzoate + H(+) = a 2-(all-trans-polyprenyl)phenol + CO2. Its pathway is cofactor biosynthesis; ubiquinone biosynthesis. Functionally, catalyzes the decarboxylation of 3-octaprenyl-4-hydroxy benzoate to 2-octaprenylphenol, an intermediate step in ubiquinone biosynthesis. The polypeptide is 3-octaprenyl-4-hydroxybenzoate carboxy-lyase (Cronobacter sakazakii (strain ATCC BAA-894) (Enterobacter sakazakii)).